The following is a 263-amino-acid chain: Shikimate dehydrogenase (NADP(+)) (263 aa).

Shikimate contacts are provided by residues 16–18 and Thr65; that span reads SKS. The active-site Proton acceptor is the Lys69. Shikimate is bound by residues Asn90 and Asp105. NADP(+)-binding positions include 125 to 129, Ser181, and Leu208; that span reads GAGGS. A shikimate-binding site is contributed by Tyr210. Residue Gly230 coordinates NADP(+). Position 237 (Gln237) interacts with shikimate.

This sequence belongs to the shikimate dehydrogenase family. As to quaternary structure, homodimer.

It catalyses the reaction shikimate + NADP(+) = 3-dehydroshikimate + NADPH + H(+). The protein operates within metabolic intermediate biosynthesis; chorismate biosynthesis; chorismate from D-erythrose 4-phosphate and phosphoenolpyruvate: step 4/7. Involved in the biosynthesis of the chorismate, which leads to the biosynthesis of aromatic amino acids. Catalyzes the reversible NADPH linked reduction of 3-dehydroshikimate (DHSA) to yield shikimate (SA). The chain is Shikimate dehydrogenase (NADP(+)) from Helicobacter pylori (strain ATCC 700392 / 26695) (Campylobacter pylori).